Here is a 576-residue protein sequence, read N- to C-terminus: WAP, Kazal, immunoglobulin, Kunitz and NTR domain-containing protein 2 (576 aa).

The first 34 residues, 1–34, serve as a signal peptide directing secretion; that stretch reads MWAPRCRRFWSRWEQVAALLLLLLLLGVPPRSLA. The region spanning 39–92 is the WAP domain; sequence RYSHAGICPNDMNPNLWVDAQSTCRRECETDQECETYEKCCPNVCGTKSCVAAR. 8 cysteine pairs are disulfide-bonded: Cys-46–Cys-79, Cys-62–Cys-83, Cys-66–Cys-78, Cys-72–Cys-88, Cys-134–Cys-164, Cys-138–Cys-157, Cys-146–Cys-175, and Cys-231–Cys-287. Residues 126–177 enclose the Kazal-like domain; the sequence is WDGQPVCKCKDRCEKEPSFTCASDGLTYYNRCYMDAEACSKGITLAVVTCRY. An Ig-like C2-type domain is found at 210–303; it reads PALLNNPVHQ…GVLRADFPLS (94 aa). Asn-319 carries an N-linked (GlcNAc...) asparagine glycan. Cystine bridges form between Cys-328-Cys-378, Cys-337-Cys-361, Cys-353-Cys-374, Cys-386-Cys-436, Cys-395-Cys-419, Cys-411-Cys-432, Cys-445-Cys-515, Cys-448-Cys-517, and Cys-459-Cys-566. BPTI/Kunitz inhibitor domains are found at residues 328 to 378 and 386 to 436; these read CLKP…MLAC and CSLP…EESC. An NTR domain is found at 445–566; the sequence is CRACKPRQKL…LREVMHKKTC (122 aa). A glycan (N-linked (GlcNAc...) asparagine) is linked at Asn-519.

This sequence belongs to the WFIKKN family. Interacts with both mature and propeptide myostatin/MSTN. As to expression, primarily expressed in ovary, testis and brain, but not in liver. In fetal tissues, it is primarily expressed in brain, skeletal muscle, thymus and kidney.

It localises to the secreted. Protease-inhibitor that contains multiple distinct protease inhibitor domains. Probably has serine protease- and metalloprotease-inhibitor activity. Inhibits the biological activity of mature myostatin, but not activin. The sequence is that of WAP, Kazal, immunoglobulin, Kunitz and NTR domain-containing protein 2 (WFIKKN2) from Homo sapiens (Human).